We begin with the raw amino-acid sequence, 131 residues long: MSMSDPIADMLTRIRNAQMVEKAVVLVPSSKVKVAIAQVLKDEGYIDGFSVKTDDGKSQLEIALKYYAGRPVIERIERVSRPGLRVYKGHGAIPQVMNGLGVAIVTTPQGVMTDRKARATGIGGEVLCYVA.

Belongs to the universal ribosomal protein uS8 family. Part of the 30S ribosomal subunit. Contacts proteins S5 and S12.

Functionally, one of the primary rRNA binding proteins, it binds directly to 16S rRNA central domain where it helps coordinate assembly of the platform of the 30S subunit. The chain is Small ribosomal subunit protein uS8 from Polaromonas sp. (strain JS666 / ATCC BAA-500).